Reading from the N-terminus, the 303-residue chain is 1D-myo-inositol 2-acetamido-2-deoxy-alpha-D-glucopyranoside deacetylase (303 aa).

Positions 15, 18, and 157 each coordinate Zn(2+).

Belongs to the MshB deacetylase family. Requires Zn(2+) as cofactor.

It carries out the reaction 1D-myo-inositol 2-acetamido-2-deoxy-alpha-D-glucopyranoside + H2O = 1D-myo-inositol 2-amino-2-deoxy-alpha-D-glucopyranoside + acetate. In terms of biological role, catalyzes the deacetylation of 1D-myo-inositol 2-acetamido-2-deoxy-alpha-D-glucopyranoside (GlcNAc-Ins) in the mycothiol biosynthesis pathway. In Kribbella flavida (strain DSM 17836 / JCM 10339 / NBRC 14399), this protein is 1D-myo-inositol 2-acetamido-2-deoxy-alpha-D-glucopyranoside deacetylase.